Reading from the N-terminus, the 390-residue chain is S-adenosylmethionine synthase 1 (390 aa).

Position 9 (E9) interacts with Mg(2+). H15 is a binding site for ATP. E43 serves as a coordination point for K(+). Positions 56 and 99 each coordinate L-methionine. ATP is bound by residues 167-169 (DGK), 235-238 (SGRF), D246, 252-253 (RK), A269, K273, and K277. Residue D246 participates in L-methionine binding. Position 277 (K277) interacts with L-methionine.

This sequence belongs to the AdoMet synthase family. As to quaternary structure, homotetramer. Mn(2+) is required as a cofactor. It depends on Mg(2+) as a cofactor. The cofactor is Co(2+). K(+) serves as cofactor.

The protein resides in the cytoplasm. It catalyses the reaction L-methionine + ATP + H2O = S-adenosyl-L-methionine + phosphate + diphosphate. Its pathway is amino-acid biosynthesis; S-adenosyl-L-methionine biosynthesis; S-adenosyl-L-methionine from L-methionine: step 1/1. Catalyzes the formation of S-adenosylmethionine from methionine and ATP. The reaction comprises two steps that are both catalyzed by the same enzyme: formation of S-adenosylmethionine (AdoMet) and triphosphate, and subsequent hydrolysis of the triphosphate. This Actinidia chinensis var. chinensis (Chinese soft-hair kiwi) protein is S-adenosylmethionine synthase 1 (SAM1).